A 285-amino-acid polypeptide reads, in one-letter code: MTTLTHRTRRTEVSKSSEKKIESEEDTNQERSPDNEDPGDSKDIRLTLMEEVLLLGLKDKEGYTSFWNDCISSGLRGGILIELAMRGRIYLEPPTMRKKRLLDRKVLLKSDSPTGDVLLDETLKHIKATEPTETVQTWIELLTGETWNPFKLQYQLRNVRERIAKNLVEKGILTTEKQNFLLFDMTTHPVTNTTEKQRLMKKLQDSVLERWVNDPQRMDRRTLALLVLAHSSDVLENVFSCLTDDKYDVAMNRTKDLVELDPEVEGTKHNATEMIWAVLAAFNKS.

Positions 1–43 (MTTLTHRTRRTEVSKSSEKKIESEEDTNQERSPDNEDPGDSKD) are disordered. The span at 10 to 43 (RTEVSKSSEKKIESEEDTNQERSPDNEDPGDSKD) shows a compositional bias: basic and acidic residues. Residues Trp-67 and Arg-76 each coordinate a 1,2-diacyl-sn-glycero-3-phospho-(1D-myo-inositol 4-phosphate). Position 112 is a phosphoserine (Ser-112). Arg-157 and Arg-160 together coordinate a 1,2-diacyl-sn-glycero-3-phospho-(1D-myo-inositol 4-phosphate). Residues 176–187 (EKQNFLLFDMTT) are beta-hairpin required for oligomerization.

It belongs to the GOLPH3/VPS74 family. In terms of assembly, homooligomer. Does not interact MYO18; differs from GOLPH3 by its inability to interact with MYO18. May interact with ARF1. Expressed in a subset of tissues tested with higher expression in salivary gland, small intestine and skin (at protein level).

The protein localises to the golgi apparatus. It localises to the golgi stack membrane. Its subcellular location is the trans-Golgi network membrane. Functionally, phosphatidylinositol-4-phosphate-binding protein that may antagonize the action of GOLPH3 which is required for the process of vesicle budding at the Golgi and anterograde transport to the plasma membrane. This Mus musculus (Mouse) protein is Golgi phosphoprotein 3-like (Golph3l).